We begin with the raw amino-acid sequence, 153 residues long: MANKDAALKALIEPVVTAMGFELWGVDYLSQGKHSRLVIYIESADGVTVDDCAAVSRQVSGVLDVEDPISGEYRLEVSSPGMDRPLFTLEQFASFKGSHVKVKLSTPFEGRRKFQGQLAGVEGDEILLHLDGQEYCFPIESIEQARVVPQFDN.

Belongs to the RimP family.

It is found in the cytoplasm. Its function is as follows. Required for maturation of 30S ribosomal subunits. The chain is Ribosome maturation factor RimP from Chromohalobacter salexigens (strain ATCC BAA-138 / DSM 3043 / CIP 106854 / NCIMB 13768 / 1H11).